The sequence spans 340 residues: Homeobox protein DBX2 (340 aa).

A DNA-binding region (homeobox) is located at residues 185-244 (GILRRAVFSEDQRKALEKMFQKQKYISKTDRKKLAINLGLKESQVKIWFQNRRMKWRNSK). The segment at 283–313 (QQHPSPGWRENSPEPSERLIQGSPGAEALPP) is disordered.

Belongs to the H2.0 homeobox family.

Its subcellular location is the nucleus. The chain is Homeobox protein DBX2 (DBX2) from Bos taurus (Bovine).